Here is a 364-residue protein sequence, read N- to C-terminus: Natterin-3 (364 aa).

An N-terminal signal peptide occupies residues 1–18 (MKLSVLVVTLLAVSWTSA). A propeptide spanning residues 19-42 (QPETFSIQTKEANMNPEPANIRVA) is cleaved from the precursor.

This sequence belongs to the natterin family. Contains 4 disulfide bonds. In terms of tissue distribution, expressed by the venom gland.

The protein localises to the secreted. Its activity is regulated as follows. Inhibited by tissue-kallikrein inhibitor TKI and trasylol. Plasma kallikrein inhibitor PKSI527 and classical inhibitors of serine-, metallo-, thiol- or aspartate-peptidases evokes a minor inhibition of the peptide digestion. In terms of biological role, shows nociceptive, edema-inducing and kininogenase activity with release of kallidin from low molecular weight kininogen. The cleavage occurs at Met-Lys bonds. The protein is Natterin-3 of Thalassophryne nattereri (Copper Joe toadfish).